The chain runs to 225 residues: 3-dehydroquinate dehydratase (225 aa).

Residues 30-32 (EWR) and R62 contribute to the 3-dehydroquinate site. H118 (proton donor/acceptor) is an active-site residue. The active-site Schiff-base intermediate with substrate is the K143. 3-dehydroquinate-binding residues include R186, S205, and Q209.

The protein belongs to the type-I 3-dehydroquinase family. Homodimer.

It carries out the reaction 3-dehydroquinate = 3-dehydroshikimate + H2O. It participates in metabolic intermediate biosynthesis; chorismate biosynthesis; chorismate from D-erythrose 4-phosphate and phosphoenolpyruvate: step 3/7. Involved in the third step of the chorismate pathway, which leads to the biosynthesis of aromatic amino acids. Catalyzes the cis-dehydration of 3-dehydroquinate (DHQ) and introduces the first double bond of the aromatic ring to yield 3-dehydroshikimate. This Streptococcus thermophilus (strain ATCC BAA-250 / LMG 18311) protein is 3-dehydroquinate dehydratase.